A 421-amino-acid polypeptide reads, in one-letter code: F-box only protein 9 (421 aa).

The segment at 1-63 (MAESNQNTDG…AELRRRQETA (63 aa)) is disordered. The span at 11–20 (AVEEGEDENT) shows a compositional bias: acidic residues. Residues 40-52 (LQPSSGGQRSFSR) are compositionally biased toward polar residues. Over residues 54-63 (AELRRRQETA) the composition is skewed to basic and acidic residues. Residues 68 to 101 (ARELFLKAVEEEQNGAVYEAIKYYKSAMQLVPDI) form a TPR repeat. An F-box domain is found at 158-209 (QVHISALPFEVLMYIFRWVVSCDLDLRALEQLSLVCRGFYICARDPEIWRSA).

Part of the SCF (SKP1-CUL1-F-box) E3 ubiquitin-protein ligase complex SCF(fbxo9).

The protein resides in the cytoplasm. It functions in the pathway protein modification; protein ubiquitination. Substrate recognition component of a SCF (SKP1-CUL1-F-box protein) E3 ubiquitin-protein ligase complex which mediates the ubiquitination and subsequent proteasomal degradation of target proteins and acts as a regulator of mTOR signaling. In Danio rerio (Zebrafish), this protein is F-box only protein 9 (fbxo9).